The following is a 401-amino-acid chain: Solute carrier family 22 member 17 (401 aa).

10 helical membrane passes run 10–30, 35–55, 69–89, 100–120, 184–203, 218–238, 247–267, 277–297, 309–329, and 336–356; these read GIVL…AAAG, IMAL…GVYL, VALA…GLAL, MITA…FLES, NIWK…HAIR, FYLC…FLGV, GILL…LGLW, TFSV…TLLA, GLGL…AQRL, and FLQH…IMLL.

Belongs to the major facilitator (TC 2.A.1) superfamily. Organic cation transporter (TC 2.A.1.19) family. In terms of tissue distribution, widely expressed.

It is found in the cell membrane. The protein localises to the vacuole membrane. Its function is as follows. Cell surface receptor for LCN2 (24p3) that plays a key role in iron homeostasis and transport. Able to bind iron-bound LCN2 (holo-24p3), followed by internalization of holo-24p3 and release of iron, thereby increasing intracellular iron concentration and leading to inhibition of apoptosis. Also binds iron-free LCN2 (apo-24p3), followed by internalization of apo-24p3 and its association with an intracellular siderophore, leading to iron chelation and iron transfer to the extracellular medium, thereby reducing intracellular iron concentration and resulting in apoptosis. This chain is Solute carrier family 22 member 17 (Slc22a17), found in Mus musculus (Mouse).